Reading from the N-terminus, the 207-residue chain is Large ribosomal subunit protein bL25 (207 aa).

The protein belongs to the bacterial ribosomal protein bL25 family. CTC subfamily. Part of the 50S ribosomal subunit; part of the 5S rRNA/L5/L18/L25 subcomplex. Contacts the 5S rRNA. Binds to the 5S rRNA independently of L5 and L18.

This is one of the proteins that binds to the 5S RNA in the ribosome where it forms part of the central protuberance. This chain is Large ribosomal subunit protein bL25, found in Orientia tsutsugamushi (strain Ikeda) (Rickettsia tsutsugamushi).